The chain runs to 426 residues: Dihydroorotase (426 aa).

Residues His62 and His64 each coordinate Zn(2+). Substrate contacts are provided by residues 64–66 (HLR) and Asn96. Asp154, His181, and His234 together coordinate Zn(2+). Asn280 contributes to the substrate binding site. Asp307 contacts Zn(2+). Asp307 is a catalytic residue. Substrate is bound by residues His311 and 325-326 (FG).

This sequence belongs to the metallo-dependent hydrolases superfamily. DHOase family. Class I DHOase subfamily. Zn(2+) serves as cofactor.

The enzyme catalyses (S)-dihydroorotate + H2O = N-carbamoyl-L-aspartate + H(+). It participates in pyrimidine metabolism; UMP biosynthesis via de novo pathway; (S)-dihydroorotate from bicarbonate: step 3/3. Catalyzes the reversible cyclization of carbamoyl aspartate to dihydroorotate. The protein is Dihydroorotase of Desulforapulum autotrophicum (strain ATCC 43914 / DSM 3382 / VKM B-1955 / HRM2) (Desulfobacterium autotrophicum).